Here is a 107-residue protein sequence, read N- to C-terminus: DNA polymerase delta subunit 4 (107 aa).

Residues Met-1–Lys-16 carry the PCNA-interaction protein motif (PIP box) motif. The interval Met-1–Ser-40 is disordered. Residues Lys-15–Leu-28 show a composition bias toward basic and acidic residues.

Belongs to the DNA polymerase delta subunit 4 family. As to quaternary structure, component of the tetrameric DNA polymerase delta complex (Pol-delta4), which consists of POLD1/p125, POLD2/p50, POLD3/p66/p68 and POLD4/p12, with POLD1 bearing DNA polymerase and 3' to 5' proofreading exonuclease activities. Within this complex, directly interacts with POLD1 and POLD2. Directly interacts with PCNA, as do POLD1 and POLD3; this interaction stimulates Pol-delta4 polymerase activity. As POLD1 and POLD2, directly interacts with WRNIP1; this interaction stimulates DNA polymerase delta-mediated DNA synthesis, independently of the presence of PCNA, possibly by increasing initiation frequency. Upon genotoxic stress induced by DNA damaging agents or by replication stress, POLD4 is proteolytically degraded and Pol-delta4 is converted into a trimeric form of the complex (Pol-delta3) that has an increased proofreading activity. The DNA polymerase delta complex interacts with POLDIP2; this interaction is probably mediated through direct binding to POLD2. Ubiquitinated; undergoes 'Lys-48'-linked polyubiquitination in response to UV irradiation or treatment with an alkylating agent, leading to proteasomal degradation. This modification is mediated, at least in part, by RNF8. Post-translationally, ubiquitinated; undergoes 'Lys-48'-linked ubiquitination in response to UV irradiation, leading to proteasomal degradation. This modification is partly mediated by RNF8 and by the DCX(DTL) E3 ubiquitin ligase complex (also called CRL4(CDT2)). Efficient degradation requires the presence of PCNA and is required for the inhibition of fork progression after DNA damage.

The protein resides in the nucleus. In terms of biological role, as a component of the tetrameric DNA polymerase delta complex (Pol-delta4), plays a role in high fidelity genome replication and repair. Within this complex, increases the rate of DNA synthesis and decreases fidelity by regulating POLD1 polymerase and proofreading 3' to 5' exonuclease activity. Pol-delta4 participates in Okazaki fragment processing, through both the short flap pathway, as well as a nick translation system. Under conditions of DNA replication stress, required for the repair of broken replication forks through break-induced replication (BIR), a mechanism that may induce segmental genomic duplications of up to 200 kb. Involved in Pol-delta4 translesion synthesis (TLS) of templates carrying O6-methylguanine or abasic sites. Its degradation in response to DNA damage is required for the inhibition of fork progression and cell survival. This Mus musculus (Mouse) protein is DNA polymerase delta subunit 4 (Pold4).